The primary structure comprises 393 residues: tRNA(Met) cytidine acetate ligase (393 aa).

ATP contacts are provided by glycine 81, asparagine 142, and arginine 167.

This sequence belongs to the TmcAL family.

The protein localises to the cytoplasm. The catalysed reaction is cytidine(34) in elongator tRNA(Met) + acetate + ATP = N(4)-acetylcytidine(34) in elongator tRNA(Met) + AMP + diphosphate. Functionally, catalyzes the formation of N(4)-acetylcytidine (ac(4)C) at the wobble position of elongator tRNA(Met), using acetate and ATP as substrates. First activates an acetate ion to form acetyladenylate (Ac-AMP) and then transfers the acetyl group to tRNA to form ac(4)C34. This is tRNA(Met) cytidine acetate ligase from Bacillus mycoides (strain KBAB4) (Bacillus weihenstephanensis).